A 333-amino-acid polypeptide reads, in one-letter code: Cell shape-determining protein Mbl (333 aa).

Residues 12 to 14, 156 to 158, 204 to 207, and 284 to 287 each bind ATP; these read TAN, GGT, EDIK, and GGAL.

Belongs to the FtsA/MreB family. In terms of assembly, forms polymers.

The protein localises to the cytoplasm. In terms of biological role, forms membrane-associated dynamic filaments that are essential for cell shape determination. Acts by regulating cell wall synthesis and cell elongation, and thus cell shape. A feedback loop between cell geometry and Mbl localization may maintain elongated cell shape by targeting cell wall growth to regions of negative cell wall curvature. The polypeptide is Cell shape-determining protein Mbl (Bacillus cereus (strain ATCC 10987 / NRS 248)).